The primary structure comprises 129 residues: Cytochrome c oxidase subunit 5B, mitochondrial (129 aa).

The N-terminal 31 residues, 1–31 (MASRLLRGAGALAAQALRARGPSGAAAVRSM), are a transit peptide targeting the mitochondrion. Residues Lys68 and Lys86 each carry the N6-acetyllysine modification. Zn(2+) is bound by residues Cys91, Cys93, Cys113, and Cys116. An N6-acetyllysine modification is found at Lys121.

Belongs to the cytochrome c oxidase subunit 5B family. Component of the cytochrome c oxidase (complex IV, CIV), a multisubunit enzyme composed of 14 subunits. The complex is composed of a catalytic core of 3 subunits MT-CO1, MT-CO2 and MT-CO3, encoded in the mitochondrial DNA, and 11 supernumerary subunits COX4I, COX5A, COX5B, COX6A, COX6B, COX6C, COX7A, COX7B, COX7C, COX8 and NDUFA4, which are encoded in the nuclear genome. The complex exists as a monomer or a dimer and forms supercomplexes (SCs) in the inner mitochondrial membrane with NADH-ubiquinone oxidoreductase (complex I, CI) and ubiquinol-cytochrome c oxidoreductase (cytochrome b-c1 complex, complex III, CIII), resulting in different assemblies (supercomplex SCI(1)III(2)IV(1) and megacomplex MCI(2)III(2)IV(2)).

Its subcellular location is the mitochondrion inner membrane. The protein operates within energy metabolism; oxidative phosphorylation. Functionally, component of the cytochrome c oxidase, the last enzyme in the mitochondrial electron transport chain which drives oxidative phosphorylation. The respiratory chain contains 3 multisubunit complexes succinate dehydrogenase (complex II, CII), ubiquinol-cytochrome c oxidoreductase (cytochrome b-c1 complex, complex III, CIII) and cytochrome c oxidase (complex IV, CIV), that cooperate to transfer electrons derived from NADH and succinate to molecular oxygen, creating an electrochemical gradient over the inner membrane that drives transmembrane transport and the ATP synthase. Cytochrome c oxidase is the component of the respiratory chain that catalyzes the reduction of oxygen to water. Electrons originating from reduced cytochrome c in the intermembrane space (IMS) are transferred via the dinuclear copper A center (CU(A)) of subunit 2 and heme A of subunit 1 to the active site in subunit 1, a binuclear center (BNC) formed by heme A3 and copper B (CU(B)). The BNC reduces molecular oxygen to 2 water molecules using 4 electrons from cytochrome c in the IMS and 4 protons from the mitochondrial matrix. This Pongo abelii (Sumatran orangutan) protein is Cytochrome c oxidase subunit 5B, mitochondrial (COX5B).